A 666-amino-acid chain; its full sequence is Secreted protein ARB_01864 (666 aa).

The N-terminal stretch at 1 to 18 (MRFSTLVSLAAWAAAALA) is a signal peptide. Residues N160, N216, N342, N405, N594, N600, and N662 are each glycosylated (N-linked (GlcNAc...) asparagine). A disordered region spans residues 323–353 (RGSMKPRGVPNPTRRAIKGNATTSTQPYQHP).

It localises to the secreted. This chain is Secreted protein ARB_01864, found in Arthroderma benhamiae (strain ATCC MYA-4681 / CBS 112371) (Trichophyton mentagrophytes).